A 55-amino-acid polypeptide reads, in one-letter code: Large ribosomal subunit protein bL33 (55 aa).

This sequence belongs to the bacterial ribosomal protein bL33 family.

The protein is Large ribosomal subunit protein bL33 of Klebsiella pneumoniae (strain 342).